We begin with the raw amino-acid sequence, 224 residues long: Probable 2' cyclic ADP-D-ribose synthase BdTIR (224 aa).

The region spanning 51–178 (SRYEVFINHR…RFKFALREAK (128 aa)) is the TIR domain. NAD(+) contacts are provided by residues 60–65 (RGVDTK) and Gly93. The active site involves Glu127.

Homodimer.

It catalyses the reaction NAD(+) + H2O = ADP-D-ribose + nicotinamide + H(+). The enzyme catalyses NADP(+) + H2O = ADP-D-ribose 2'-phosphate + nicotinamide + H(+). It carries out the reaction NAD(+) = 2'cADPR + nicotinamide + H(+). Functionally, an NAD(+) hydrolase (NADase). Upon activation catalyzes cleavage of NAD(+) into ADP-D-ribose (ADPR) and nicotinamide; NAD(+) cleavage triggers a defense system that promotes cell death. In addition to ADPR, also generates a cyclization variant of cyclic ADPR termed v-cADPR (2'cADPR). Also hydrolyzes NADP(+), but not other NAD(+)-related molecules. v-cADPR activates ThsA, an NAD(+) hydrolase in B.cereus (AC J8G6Z1). Probably makes 2'cADPR; the cADPR made by this protein is bound by cmTad1 (AC P0DW61) and activates ThsA from B.cereus. Boiling cmTad1 bound to the cyclic nucleotide releases 2'cADPR, strongly suggesting it is the product of this protein. The sequence is that of Probable 2' cyclic ADP-D-ribose synthase BdTIR from Brachypodium distachyon (Purple false brome).